The chain runs to 1423 residues: Protein Shroom2 (1423 aa).

The interval 1-101 is disordered; the sequence is MRPSTVTSRI…PDHTLPKADA (101 aa). Low complexity predominate over residues 8–27; it reads SRIWWSESSSSSSHDLSGSW. Composition is skewed to polar residues over residues 28 to 69 and 83 to 93; these read EHTS…NSSI and GSFSTCSSTPD. Ser-103 is subject to Phosphoserine. The disordered stretch occupies residues 116–171; it reads ASRPGSSRQSQSTGDPQGLQDRPSSFLPRVPGNSSKSPRPEDNIEPKIATSGRSNF. Positions 119–130 are enriched in polar residues; sequence PGSSRQSQSTGD. Residues Ser-185, Ser-197, and Ser-291 each carry the phosphoserine modification. 5 disordered regions span residues 300-357, 586-630, 758-855, 872-930, and 1045-1085; these read SYHG…VNQK, TSFQ…SAPR, EILS…SGGQ, PSSS…KLTD, and VETP…KEKT. The 103-residue stretch at 575-677 folds into the ASD1 domain; it reads LKEAQTRVLK…SEPEKINEVG (103 aa). Basic and acidic residues predominate over residues 761-771; sequence SEDRKVEKASE. Ser-806, Ser-830, Ser-831, and Ser-833 each carry phosphoserine. The residue at position 834 (Thr-834) is a Phosphothreonine. Over residues 872–885 the composition is skewed to low complexity; sequence PSSSVLSSAQPQDS. Polar residues predominate over residues 891–923; the sequence is DPTSPQPEAQLSSKCQHLQTSTMETSRSPSPQF. Ser-918 and Ser-920 each carry phosphoserine. Pro residues predominate over residues 1054–1065; sequence PEPQPPSTPAPP. Phosphoserine is present on residues Ser-1072 and Ser-1329. The ASD2 domain maps to 1092-1418; sequence EELAREIVGK…QLKCLFDSLQ (327 aa).

It belongs to the shroom family. Interacts with F-actin.

It localises to the apical cell membrane. The protein localises to the cell junction. Its subcellular location is the tight junction. The protein resides in the cytoplasm. It is found in the cytoskeleton. Functionally, may be involved in endothelial cell morphology changes during cell spreading. In the retinal pigment epithelium, may regulate the biogenesis of melanosomes and promote their association with the apical cell surface by inducing gamma-tubulin redistribution. The polypeptide is Protein Shroom2 (Shroom2) (Rattus norvegicus (Rat)).